The following is a 231-amino-acid chain: ABC transporter ATP-binding protein YtrE (231 aa).

The 228-residue stretch at 4–231 folds into the ABC transporter domain; that stretch reads VQHIDHSFTI…VLKGGITVEV (228 aa). 42–49 contributes to the ATP binding site; the sequence is GRSGSGKS.

This sequence belongs to the ABC transporter superfamily. In terms of assembly, the complex is composed of 2 ATP-binding proteins (YtrB and YtrE), 2 transmembrane proteins (YtrC and YtrD) and a solute-binding protein (YtrF).

Its subcellular location is the cell membrane. In terms of biological role, part of the ABC transporter complex YtrBCDEF that plays a role in acetoin utilization during stationary phase and sporulation. The protein is ABC transporter ATP-binding protein YtrE (ytrE) of Bacillus subtilis (strain 168).